The following is a 402-amino-acid chain: Protein FAM53A (402 aa).

Position 119 is a phosphoserine (Ser119). The tract at residues 170–215 (LVPGLPRRPVSPAGPTSPLTPRPASASSGFVDGSEGSTSSGPPWLS) is disordered. The Nuclear localization signal motif lies at 273-281 (RRVRRKRRR). Residues Ser306 and Ser309 each carry the phosphoserine modification. The span at 323–333 (TLVSSPCNSQG) shows a compositional bias: polar residues. The interval 323–402 (TLVSSPCNSQ…DLDLEQIENN (80 aa)) is disordered. A compositionally biased stretch (low complexity) spans 336–345 (GIITPSSSPR).

The protein belongs to the FAM53 family.

Its subcellular location is the nucleus. In terms of biological role, may play an important role in neural development; the dorsomedial roof of the third ventricle. The polypeptide is Protein FAM53A (Mus musculus (Mouse)).